A 344-amino-acid chain; its full sequence is Phosphoribosylformylglycinamidine cyclo-ligase (344 aa).

It belongs to the AIR synthase family.

Its subcellular location is the cytoplasm. The enzyme catalyses 2-formamido-N(1)-(5-O-phospho-beta-D-ribosyl)acetamidine + ATP = 5-amino-1-(5-phospho-beta-D-ribosyl)imidazole + ADP + phosphate + H(+). It participates in purine metabolism; IMP biosynthesis via de novo pathway; 5-amino-1-(5-phospho-D-ribosyl)imidazole from N(2)-formyl-N(1)-(5-phospho-D-ribosyl)glycinamide: step 2/2. The sequence is that of Phosphoribosylformylglycinamidine cyclo-ligase from Exiguobacterium sibiricum (strain DSM 17290 / CCUG 55495 / CIP 109462 / JCM 13490 / 255-15).